Reading from the N-terminus, the 446-residue chain is Probable tRNA modification GTPase MnmE (446 aa).

(6S)-5-formyl-5,6,7,8-tetrahydrofolate is bound by residues R28, E87, and R126. One can recognise a TrmE-type G domain in the interval 218–373; the sequence is GIQVALLGPA…LKQLIWQQAT (156 aa). N228 contributes to the K(+) binding site. GTP contacts are provided by residues 228–233, 247–253, and 272–275; these read NAGKST, TPIAGTT, and DTAG. Mg(2+) is bound at residue S232. Residues T247, I249, and T252 each coordinate K(+). Position 253 (T253) interacts with Mg(2+). (6S)-5-formyl-5,6,7,8-tetrahydrofolate is bound at residue K446.

The protein belongs to the TRAFAC class TrmE-Era-EngA-EngB-Septin-like GTPase superfamily. TrmE GTPase family. It depends on K(+) as a cofactor.

Its subcellular location is the plastid. The protein localises to the chloroplast. Functionally, exhibits a very high intrinsic GTPase hydrolysis rate. Involved in the addition of a carboxymethylaminomethyl (cmnm) group at the wobble position (U34) of certain tRNAs, forming tRNA-cmnm(5)s(2)U34. The chain is Probable tRNA modification GTPase MnmE from Cyanidioschyzon merolae (strain NIES-3377 / 10D) (Unicellular red alga).